The primary structure comprises 274 residues: Protein YeeZ (274 aa).

Positions 1-24 are cleaved as a signal peptide; sequence MKKVAIVGLGWLGMPLAMSLSARG. ATP is bound at residue 170–177; that stretch reads GRFFAGKT.

The protein is Protein YeeZ (yeeZ) of Escherichia coli O157:H7.